Reading from the N-terminus, the 929-residue chain is Protein translocase subunit SecA (929 aa).

Residues glutamine 87, glycine 105 to threonine 109, and aspartate 512 each bind ATP. The Zn(2+) site is built by cysteine 914, cysteine 916, cysteine 925, and histidine 926.

The protein belongs to the SecA family. As to quaternary structure, monomer and homodimer. Part of the essential Sec protein translocation apparatus which comprises SecA, SecYEG and auxiliary proteins SecDF-YajC and YidC. Zn(2+) is required as a cofactor.

It localises to the cell inner membrane. The protein resides in the cytoplasm. It carries out the reaction ATP + H2O + cellular proteinSide 1 = ADP + phosphate + cellular proteinSide 2.. In terms of biological role, part of the Sec protein translocase complex. Interacts with the SecYEG preprotein conducting channel. Has a central role in coupling the hydrolysis of ATP to the transfer of proteins into and across the cell membrane, serving both as a receptor for the preprotein-SecB complex and as an ATP-driven molecular motor driving the stepwise translocation of polypeptide chains across the membrane. The chain is Protein translocase subunit SecA from Psychrobacter arcticus (strain DSM 17307 / VKM B-2377 / 273-4).